We begin with the raw amino-acid sequence, 190 residues long: Large ribosomal subunit protein bL25 (190 aa).

Residues M1–N20 form a disordered region.

Belongs to the bacterial ribosomal protein bL25 family. CTC subfamily. In terms of assembly, part of the 50S ribosomal subunit; part of the 5S rRNA/L5/L18/L25 subcomplex. Contacts the 5S rRNA. Binds to the 5S rRNA independently of L5 and L18.

This is one of the proteins that binds to the 5S RNA in the ribosome where it forms part of the central protuberance. This Nitratidesulfovibrio vulgaris (strain ATCC 29579 / DSM 644 / CCUG 34227 / NCIMB 8303 / VKM B-1760 / Hildenborough) (Desulfovibrio vulgaris) protein is Large ribosomal subunit protein bL25.